Consider the following 389-residue polypeptide: Chalcone synthase E (389 aa).

Residue cysteine 164 is part of the active site.

The protein belongs to the thiolase-like superfamily. Chalcone/stilbene synthases family.

The enzyme catalyses (E)-4-coumaroyl-CoA + 3 malonyl-CoA + 3 H(+) = 2',4,4',6'-tetrahydroxychalcone + 3 CO2 + 4 CoA. It functions in the pathway secondary metabolite biosynthesis; flavonoid biosynthesis. In terms of biological role, the primary product of this enzyme is 4,2',4',6'-tetrahydroxychalcone (also termed naringenin-chalcone or chalcone) which can under specific conditions spontaneously isomerize into naringenin. The sequence is that of Chalcone synthase E (CHSE) from Ipomoea nil (Japanese morning glory).